The following is a 594-amino-acid chain: Proteasome-associated ATPase (594 aa).

Residues M1–T12 are compositionally biased toward polar residues. A disordered region spans residues M1–Y20. Residues R18–K71 are a coiled coil. ATP is bound at residue G282 to L287. The segment at Y593–L594 is docks into pockets in the proteasome alpha-ring.

The protein belongs to the AAA ATPase family. In terms of assembly, homohexamer. Assembles into a hexameric ring structure that caps the 20S proteasome core. Strongly interacts with the prokaryotic ubiquitin-like protein Pup through a hydrophobic interface; the interacting region of ARC lies in its N-terminal coiled-coil domain. There is one Pup binding site per ARC hexamer ring. Upon ATP-binding, the C-terminus of ARC interacts with the alpha-rings of the proteasome core, possibly by binding to the intersubunit pockets.

It functions in the pathway protein degradation; proteasomal Pup-dependent pathway. ATPase which is responsible for recognizing, binding, unfolding and translocation of pupylated proteins into the bacterial 20S proteasome core particle. May be essential for opening the gate of the 20S proteasome via an interaction with its C-terminus, thereby allowing substrate entry and access to the site of proteolysis. Thus, the C-termini of the proteasomal ATPase may function like a 'key in a lock' to induce gate opening and therefore regulate proteolysis. The polypeptide is Proteasome-associated ATPase (Renibacterium salmoninarum (strain ATCC 33209 / DSM 20767 / JCM 11484 / NBRC 15589 / NCIMB 2235)).